A 419-amino-acid chain; its full sequence is MDKLKIEASGALAGDVVISGAKNAALPILMAGVLAETDFNVSNVPSLRDVNTSCELLRCLGAEVTRSGDDKVCISTTNLNEFCAPYELVKTMRASILILGPLLARYGKADVSLPGGCAIGARPVNLHLQGLEQMGAKIEVKEGYIKARVDGRLKGAHIFMDMISVGATENLLMAAALADGETVIENAAREPEVVDLANCLIAMGAKIEGAGTDTVRIQGVESLQGCDYQVMPDRIETGSFLVAAAVTRGKIRCIKADPKSLEAVLAKLEDAGASITTGDDWIELDMQGQRPKAVNIKTVAYPGFPTDMQAQFCVLNALAEGTATITETIFENRFMHVPELSRMGATMELEGNTCIIHGIEKLNGAQVMATDLRASASLVIAGLVADGTTTVDRIYHLDRGYEHIEDKFKGLGGDVKRVK.

22 to 23 (KN) is a binding site for phosphoenolpyruvate. R93 lines the UDP-N-acetyl-alpha-D-glucosamine pocket. C117 acts as the Proton donor in catalysis. Position 117 is a 2-(S-cysteinyl)pyruvic acid O-phosphothioketal (C117). Positions 307 and 329 each coordinate UDP-N-acetyl-alpha-D-glucosamine.

It belongs to the EPSP synthase family. MurA subfamily.

The protein resides in the cytoplasm. The enzyme catalyses phosphoenolpyruvate + UDP-N-acetyl-alpha-D-glucosamine = UDP-N-acetyl-3-O-(1-carboxyvinyl)-alpha-D-glucosamine + phosphate. Its pathway is cell wall biogenesis; peptidoglycan biosynthesis. Its function is as follows. Cell wall formation. Adds enolpyruvyl to UDP-N-acetylglucosamine. The polypeptide is UDP-N-acetylglucosamine 1-carboxyvinyltransferase (Shewanella piezotolerans (strain WP3 / JCM 13877)).